Here is a 209-residue protein sequence, read N- to C-terminus: Mitochondrial import inner membrane translocase subunit Tim23 (209 aa).

Helical transmembrane passes span 73–93 (FELA…FGAM), 125–145 (ALWA…GVII), and 181–197 (GLAG…YNNW).

The protein belongs to the Tim17/Tim22/Tim23 family. In terms of assembly, component of the TIM23 complex at least composed of TIMM23, TIMM17 (TIMM17A or TIMM17B) and TIMM50; within this complex, directly interacts with TIMM50. The complex interacts with the TIMM44 component of the PAM complex and with DNAJC15. Upon mitochondrial depolarization, interacts with PINK1; the interaction is required for PINK1 accumulation at the outer mitochondrial membrane, kinase activation by autophosphorylation and PRKN recruitement to mitochondria.

It is found in the mitochondrion inner membrane. Essential component of the TIM23 complex, a complex that mediates the translocation of transit peptide-containing proteins across the mitochondrial inner membrane. Has a role in the activation of stress-induced mitophagy by protecting PINK1 from OMA1-mediated degradation and facilitating its accumulation at the outer mitochondrial membrane in response to depolarization. The chain is Mitochondrial import inner membrane translocase subunit Tim23 (Timm23) from Mus musculus (Mouse).